A 495-amino-acid chain; its full sequence is Sialin (495 aa).

Basic and acidic residues predominate over residues 1–18 (MRSPVRDLARNDGEESTD). Positions 1 to 24 (MRSPVRDLARNDGEESTDRTPLLP) are disordered. The Cytoplasmic segment spans residues 1 to 41 (MRSPVRDLARNDGEESTDRTPLLPGAPRAEAAPVCCSARYN). Ser-3 carries the post-translational modification Phosphoserine. Residues 22–23 (LL) carry the Dileucine internalization motif motif. The chain crosses the membrane as a helical span at residues 42–62 (LAILAFFGFFIVYALRVNLSV). Over 63-109 (ALVDMVDSNTTLEDNRTSKACPEHSAPIKVHHNQTGKKYQWDAETQG) the chain is Lumenal. Residues Asn-71, Asn-77, and Asn-95 are each glycosylated (N-linked (GlcNAc...) asparagine). Residues 110–130 (WILGSFFYGYIITQIPGGYVA) traverse the membrane as a helical segment. Residues 131 to 136 (SKIGGK) are Cytoplasmic-facing. Residues 137–157 (MLLGFGILGTAVLTLFTPIAA) traverse the membrane as a helical segment. A topological domain (lumenal) is located at residue Asp-158. The helical transmembrane segment at 159-179 (LGVGPLIVLRALEGLGEGVTF) threads the bilayer. At 180–200 (PAMHAMWSSWAPPLERSKLLS) the chain is on the cytoplasmic side. Residues 201-221 (ISYAGAQLGTVISLPLSGIIC) form a helical membrane-spanning segment. Residues 222–227 (YYMNWT) lie on the Lumenal side of the membrane. A helical membrane pass occupies residues 228–248 (YVFYFFGTIGIFWFLLWIWLV). At 249–279 (SDTPQKHKRISHYEKEYILSSLRNQLSSQKS) the chain is on the cytoplasmic side. A helical transmembrane segment spans residues 280-300 (VPWVPILKSLPLWAIVVAHFS). Residues 301–328 (YNWTFYTLLTLLPTYMKEILRFNVQENG) lie on the Lumenal side of the membrane. The helical transmembrane segment at 329-349 (FLSSLPYLGSWLCMILSGQAA) threads the bilayer. Over 350–365 (DNLRAKWNFSTLCVRR) the chain is Cytoplasmic. A helical transmembrane segment spans residues 366 to 386 (IFSLIGMIGPAVFLVAAGFIG). The Lumenal segment spans residues 387–391 (CDYSL). A helical transmembrane segment spans residues 392–412 (AVAFLTISTTLGGFCSSGFSI). Over 413 to 423 (NHLDIAPSYAG) the chain is Cytoplasmic. Residues 424–444 (ILLGITNTFATIPGMVGPVIA) form a helical membrane-spanning segment. The Lumenal segment spans residues 445 to 457 (KSLTPDNTVGEWQ). A helical transmembrane segment spans residues 458–478 (TVFYIAAAINVFGAIFFTLFA). At 479 to 495 (KGEVQNWALNDHHGHRH) the chain is on the cytoplasmic side.

It belongs to the major facilitator superfamily. Sodium/anion cotransporter family. In the adult, detected in placenta, kidney and pancreas. Abundant in the endothelial cells of tumors from ovary, colon, breast and lung, but is not detected in endothelial cells from the corresponding normal tissues. Highly expressed in salivary glands and liver, with lower levels of expression in brain, spleen kidney, muscle and pancreas. Expressed in acinar cells of salivary glands (at protein level).

Its subcellular location is the basolateral cell membrane. It is found in the cytoplasmic vesicle. It localises to the secretory vesicle. The protein localises to the synaptic vesicle membrane. The protein resides in the lysosome membrane. The enzyme catalyses N-acetylneuraminate(in) + H(+)(in) = N-acetylneuraminate(out) + H(+)(out). It carries out the reaction D-glucuronate(out) + H(+)(out) = D-glucuronate(in) + H(+)(in). It catalyses the reaction 2 nitrate(out) + H(+)(out) = 2 nitrate(in) + H(+)(in). The catalysed reaction is L-aspartate(out) = L-aspartate(in). The enzyme catalyses L-glutamate(out) = L-glutamate(in). It carries out the reaction N-acetyl-L-aspartyl-L-glutamate(out) = N-acetyl-L-aspartyl-L-glutamate(in). Multifunctional anion transporter that operates via two distinct transport mechanisms, namely proton-coupled anion cotransport and membrane potential-dependent anion transport. Electroneutral proton-coupled acidic monosaccharide symporter, with a sugar to proton stoichiometry of 1:1. Exports glucuronic acid and free sialic acid derived from sialoglycoconjugate degradation out of lysosomes, driven by outwardly directed lysosomal pH gradient. May regulate lysosome function and metabolism of sialylated conjugates that impact oligodendrocyte lineage differentiation and myelinogenesis in the central nervous system. Electrogenic proton-coupled nitrate symporter that transports nitrate ions across the basolateral membrane of salivary gland acinar cells, with nitrate to proton stoichiometry of 2:1. May contribute to nitrate clearance from serum by salivary glands, where it is further concentrated and secreted in the saliva. Uses membrane potential to drive the uptake of acidic amino acids and peptides into synaptic vesicles. Responsible for synaptic vesicular storage of L-aspartate and L-glutamate in pinealocytes as well as vesicular uptake of N-acetyl-L-aspartyl-L-glutamate neuropeptide, relevant to aspartegic-associated glutamatergic neurotransmission and activation of metabotropic receptors that inhibit subsequent transmitter release. In terms of biological role, receptor for CM101, a polysaccharide produced by group B Streptococcus with antipathoangiogenic properties. In Homo sapiens (Human), this protein is Sialin (SLC17A5).